Reading from the N-terminus, the 215-residue chain is Pyrophosphatase PpaX (215 aa).

Asp-9 functions as the Nucleophile in the catalytic mechanism.

It belongs to the HAD-like hydrolase superfamily. PpaX family. It depends on Mg(2+) as a cofactor.

It carries out the reaction diphosphate + H2O = 2 phosphate + H(+). Hydrolyzes pyrophosphate formed during P-Ser-HPr dephosphorylation by HPrK/P. Might play a role in controlling the intracellular pyrophosphate pool. In Halalkalibacterium halodurans (strain ATCC BAA-125 / DSM 18197 / FERM 7344 / JCM 9153 / C-125) (Bacillus halodurans), this protein is Pyrophosphatase PpaX.